The sequence spans 594 residues: Elongation factor 4 (594 aa).

Residues 2-184 (KNIRNFSIIA…TIVAKVPAPE (183 aa)) enclose the tr-type G domain. Residues 14–19 (DHGKST) and 131–134 (NKID) each bind GTP.

The protein belongs to the TRAFAC class translation factor GTPase superfamily. Classic translation factor GTPase family. LepA subfamily.

It localises to the cell inner membrane. It carries out the reaction GTP + H2O = GDP + phosphate + H(+). Its function is as follows. Required for accurate and efficient protein synthesis under certain stress conditions. May act as a fidelity factor of the translation reaction, by catalyzing a one-codon backward translocation of tRNAs on improperly translocated ribosomes. Back-translocation proceeds from a post-translocation (POST) complex to a pre-translocation (PRE) complex, thus giving elongation factor G a second chance to translocate the tRNAs correctly. Binds to ribosomes in a GTP-dependent manner. The sequence is that of Elongation factor 4 from Francisella tularensis subsp. tularensis (strain WY96-3418).